A 95-amino-acid chain; its full sequence is Aspartyl/glutamyl-tRNA(Asn/Gln) amidotransferase subunit C (95 aa).

This sequence belongs to the GatC family. In terms of assembly, heterotrimer of A, B and C subunits.

The catalysed reaction is L-glutamyl-tRNA(Gln) + L-glutamine + ATP + H2O = L-glutaminyl-tRNA(Gln) + L-glutamate + ADP + phosphate + H(+). It carries out the reaction L-aspartyl-tRNA(Asn) + L-glutamine + ATP + H2O = L-asparaginyl-tRNA(Asn) + L-glutamate + ADP + phosphate + 2 H(+). Functionally, allows the formation of correctly charged Asn-tRNA(Asn) or Gln-tRNA(Gln) through the transamidation of misacylated Asp-tRNA(Asn) or Glu-tRNA(Gln) in organisms which lack either or both of asparaginyl-tRNA or glutaminyl-tRNA synthetases. The reaction takes place in the presence of glutamine and ATP through an activated phospho-Asp-tRNA(Asn) or phospho-Glu-tRNA(Gln). In Alcanivorax borkumensis (strain ATCC 700651 / DSM 11573 / NCIMB 13689 / SK2), this protein is Aspartyl/glutamyl-tRNA(Asn/Gln) amidotransferase subunit C.